A 456-amino-acid chain; its full sequence is Enolase (456 aa).

Gln-164 is a binding site for (2R)-2-phosphoglycerate. Glu-207 (proton donor) is an active-site residue. Positions 244, 287, and 314 each coordinate Mg(2+). Lys-339, Arg-368, Ser-369, and Lys-390 together coordinate (2R)-2-phosphoglycerate. Lys-339 (proton acceptor) is an active-site residue.

This sequence belongs to the enolase family. Component of the RNA degradosome, a multiprotein complex involved in RNA processing and mRNA degradation. Mg(2+) is required as a cofactor.

It localises to the cytoplasm. The protein resides in the secreted. Its subcellular location is the cell surface. The catalysed reaction is (2R)-2-phosphoglycerate = phosphoenolpyruvate + H2O. It participates in carbohydrate degradation; glycolysis; pyruvate from D-glyceraldehyde 3-phosphate: step 4/5. In terms of biological role, catalyzes the reversible conversion of 2-phosphoglycerate (2-PG) into phosphoenolpyruvate (PEP). It is essential for the degradation of carbohydrates via glycolysis. This is Enolase from Francisella tularensis subsp. novicida (strain U112).